Consider the following 458-residue polypeptide: tRNA-2-methylthio-N(6)-dimethylallyladenosine synthase (458 aa).

Residues lysine 15–glutamine 134 enclose the MTTase N-terminal domain. 6 residues coordinate [4Fe-4S] cluster: cysteine 24, cysteine 60, cysteine 97, cysteine 175, cysteine 179, and cysteine 182. The Radical SAM core domain maps to arginine 161 to alanine 393. The TRAM domain occupies arginine 396–asparagine 457.

The protein belongs to the methylthiotransferase family. MiaB subfamily. Monomer. [4Fe-4S] cluster serves as cofactor.

Its subcellular location is the cytoplasm. The catalysed reaction is N(6)-dimethylallyladenosine(37) in tRNA + (sulfur carrier)-SH + AH2 + 2 S-adenosyl-L-methionine = 2-methylsulfanyl-N(6)-dimethylallyladenosine(37) in tRNA + (sulfur carrier)-H + 5'-deoxyadenosine + L-methionine + A + S-adenosyl-L-homocysteine + 2 H(+). Its function is as follows. Catalyzes the methylthiolation of N6-(dimethylallyl)adenosine (i(6)A), leading to the formation of 2-methylthio-N6-(dimethylallyl)adenosine (ms(2)i(6)A) at position 37 in tRNAs that read codons beginning with uridine. This Bartonella quintana (strain Toulouse) (Rochalimaea quintana) protein is tRNA-2-methylthio-N(6)-dimethylallyladenosine synthase.